The sequence spans 87 residues: U3-theraphotoxin-Hhn1a 7 (87 aa).

The first 24 residues, 1–24 (MVNMKASMFLTFAGLVLLFVVSYA), serve as a signal peptide directing secretion. Positions 25 to 52 (SESEEKEFPKEMLSSIFAVDNDFKQEER) are excised as a propeptide. 3 disulfides stabilise this stretch: Cys54–Cys67, Cys61–Cys72, and Cys66–Cys79.

The protein belongs to the neurotoxin 10 (Hwtx-1) family. 51 (Hntx-8) subfamily. Hntx-8 sub-subfamily. In terms of tissue distribution, expressed by the venom gland.

The protein resides in the secreted. Functionally, ion channel inhibitor. In Cyriopagopus hainanus (Chinese bird spider), this protein is U3-theraphotoxin-Hhn1a 7.